The sequence spans 486 residues: N-succinylglutamate 5-semialdehyde dehydrogenase (486 aa).

Residue 220 to 225 (GSSRTG) coordinates NAD(+). Residues glutamate 243 and cysteine 277 contribute to the active site.

The protein belongs to the aldehyde dehydrogenase family. AstD subfamily.

It catalyses the reaction N-succinyl-L-glutamate 5-semialdehyde + NAD(+) + H2O = N-succinyl-L-glutamate + NADH + 2 H(+). It participates in amino-acid degradation; L-arginine degradation via AST pathway; L-glutamate and succinate from L-arginine: step 4/5. In terms of biological role, catalyzes the NAD-dependent reduction of succinylglutamate semialdehyde into succinylglutamate. The polypeptide is N-succinylglutamate 5-semialdehyde dehydrogenase (Shewanella halifaxensis (strain HAW-EB4)).